Consider the following 798-residue polypeptide: Probable DEAD-box ATP-dependent RNA helicase 48 (798 aa).

Disordered regions lie at residues 76 to 100, 117 to 148, and 236 to 257; these read KMWGNPDSGEKTAKSKQSHGPMSPK, DFWNENDGPVKKSDQGSRSGSDSIDSTSNSPI, and FRKNDSSTEEDSDEEGDEGKMI. Positions 132–148 are enriched in low complexity; the sequence is GSRSGSDSIDSTSNSPI. The segment covering 242–252 has biased composition (acidic residues); sequence STEEDSDEEGD. A Q motif motif is present at residues 328-356; it reads KRFDESCISPLTLKALSASGILKMTRVQD. The Helicase ATP-binding domain occupies 359–543; it reads LSECLDGKDA…QLVLKRDHSY (185 aa). 372–379 contacts ATP; sequence AKTGTGKS. The DEAD box signature appears at 491 to 494; it reads DEAD. The Helicase C-terminal domain maps to 577-726; the sequence is LLKEHINNTP…SIVKHQVDQS (150 aa).

It belongs to the DEAD box helicase family.

It catalyses the reaction ATP + H2O = ADP + phosphate + H(+). The polypeptide is Probable DEAD-box ATP-dependent RNA helicase 48 (RH48) (Arabidopsis thaliana (Mouse-ear cress)).